Here is a 599-residue protein sequence, read N- to C-terminus: Aspartate--tRNA(Asp/Asn) ligase (599 aa).

Residue glutamate 172 participates in L-aspartate binding. The aspartate stretch occupies residues 196-199; that stretch reads QLFK. Residue arginine 218 coordinates L-aspartate. ATP is bound by residues 218–220 and glutamine 227; that span reads RDE. Residue histidine 451 participates in L-aspartate binding. Glutamate 485 lines the ATP pocket. L-aspartate is bound at residue arginine 492. 537–540 lines the ATP pocket; sequence GLDR.

This sequence belongs to the class-II aminoacyl-tRNA synthetase family. Type 1 subfamily. As to quaternary structure, homodimer.

It localises to the cytoplasm. It carries out the reaction tRNA(Asx) + L-aspartate + ATP = L-aspartyl-tRNA(Asx) + AMP + diphosphate. In terms of biological role, aspartyl-tRNA synthetase with relaxed tRNA specificity since it is able to aspartylate not only its cognate tRNA(Asp) but also tRNA(Asn). Reaction proceeds in two steps: L-aspartate is first activated by ATP to form Asp-AMP and then transferred to the acceptor end of tRNA(Asp/Asn). This Aromatoleum aromaticum (strain DSM 19018 / LMG 30748 / EbN1) (Azoarcus sp. (strain EbN1)) protein is Aspartate--tRNA(Asp/Asn) ligase.